The primary structure comprises 260 residues: Homeobox-leucine zipper protein HOX25 (260 aa).

The segment covering 1–10 (MEDLVDELYG) has biased composition (acidic residues). Disordered stretches follow at residues 1-24 (MEDL…ARKR), 121-145 (ANGK…PESA), and 190-221 (SPES…YPSS). The segment at residues 19-79 (AAARKRRLTA…NRRARWKTKQ (61 aa)) is a DNA-binding region (homeobox). The leucine-zipper stretch occupies residues 78–122 (KQLELDFDRLRAAHDELLAGRAALAADNESLRSQVILLTEKLQAN). The span at 205–218 (SEDDCGGAGSDDDY) shows a compositional bias: acidic residues.

The protein belongs to the HD-ZIP homeobox family. Class I subfamily. In terms of tissue distribution, expressed in roots, leaf sheaths and blades and panicles.

It localises to the nucleus. In terms of biological role, probable transcription factor. In Oryza sativa subsp. indica (Rice), this protein is Homeobox-leucine zipper protein HOX25 (HOX25).